A 487-amino-acid polypeptide reads, in one-letter code: Malonate-semialdehyde dehydrogenase (487 aa).

NAD(+)-binding residues include Ala-150, Phe-152, Lys-176, Glu-179, Arg-180, Ser-229, and Thr-251. The active-site Nucleophile is the Cys-284. Residue Glu-382 coordinates NAD(+).

It belongs to the aldehyde dehydrogenase family. IolA subfamily. As to quaternary structure, homotetramer.

It catalyses the reaction 3-oxopropanoate + NAD(+) + CoA + H2O = hydrogencarbonate + acetyl-CoA + NADH + H(+). The enzyme catalyses 2-methyl-3-oxopropanoate + NAD(+) + CoA + H2O = propanoyl-CoA + hydrogencarbonate + NADH + H(+). The protein operates within polyol metabolism; myo-inositol degradation into acetyl-CoA; acetyl-CoA from myo-inositol: step 7/7. Catalyzes the oxidation of malonate semialdehyde (MSA) and methylmalonate semialdehyde (MMSA) into acetyl-CoA and propanoyl-CoA, respectively. Is involved in a myo-inositol catabolic pathway. Bicarbonate, and not CO2, is the end-product of the enzymatic reaction. This Bacillus subtilis (strain 168) protein is Malonate-semialdehyde dehydrogenase.